We begin with the raw amino-acid sequence, 342 residues long: GTPase Obg (342 aa).

In terms of domain architecture, Obg spans 1 to 159 (MKFLDEAKVY…HWLWLRLKLI (159 aa)). Positions 160–327 (ADAGLVGLPN…ALRALMAAMD (168 aa)) constitute an OBG-type G domain. Residues 166–173 (GLPNAGKS), 191–195 (FTTLH), 212–215 (DIPG), 279–282 (SKAD), and 308–310 (SAA) each bind GTP. Residues Ser-173 and Thr-193 each coordinate Mg(2+).

This sequence belongs to the TRAFAC class OBG-HflX-like GTPase superfamily. OBG GTPase family. As to quaternary structure, monomer. Mg(2+) serves as cofactor.

The protein resides in the cytoplasm. An essential GTPase which binds GTP, GDP and possibly (p)ppGpp with moderate affinity, with high nucleotide exchange rates and a fairly low GTP hydrolysis rate. Plays a role in control of the cell cycle, stress response, ribosome biogenesis and in those bacteria that undergo differentiation, in morphogenesis control. The chain is GTPase Obg from Methylobacterium nodulans (strain LMG 21967 / CNCM I-2342 / ORS 2060).